Consider the following 192-residue polypeptide: uncharacterized protein (192 aa).

The interval Met17–Ser73 is disordered. Residues Ala30–Thr41 are compositionally biased toward low complexity.

This is an uncharacterized protein from Sinorhizobium fredii (strain NBRC 101917 / NGR234).